A 160-amino-acid chain; its full sequence is Cyanate hydratase (160 aa).

Catalysis depends on residues Arg100, Glu103, and Ser126.

It belongs to the cyanase family.

It catalyses the reaction cyanate + hydrogencarbonate + 3 H(+) = NH4(+) + 2 CO2. In terms of biological role, catalyzes the reaction of cyanate with bicarbonate to produce ammonia and carbon dioxide. The polypeptide is Cyanate hydratase (Penicillium rubens (strain ATCC 28089 / DSM 1075 / NRRL 1951 / Wisconsin 54-1255) (Penicillium chrysogenum)).